A 311-amino-acid chain; its full sequence is Reaction center protein L chain (311 aa).

The next 3 helical transmembrane spans lie at 68–90, 123–151, and 156–178; these read FWGFVSVIGIIFGSYFYINETIL, GFAWQMTVLFATIAFFGWMMRQVDISMKL, and HVPIAFGVAFSAWLVLQVIRPIA. (7R,8Z)-bacteriochlorophyll b contacts are provided by His-183 and His-213. The chain crosses the membrane as a helical span at residues 211-238; that stretch reads PFHAIGITGLFASTWLLACHGSLILSAA. His-230 contributes to the Fe cation binding site. Phe-253 is a binding site for a ubiquinone. A helical membrane pass occupies residues 262–287; sequence GESGVHRLGYIFAIGGILSADLCILL. His-267 provides a ligand contact to Fe cation.

It belongs to the reaction center PufL/M/PsbA/D family. In terms of assembly, reaction center is composed of four bacteriochlorophylls, two bacteriopheophytins, two ubiquinones, one iron, and two highly hydrophobic polypeptide chains (designated L and M).

The protein resides in the cell membrane. Functionally, the reaction center is a membrane-bound complex that mediates the initial photochemical event in the electron transfer process of photosynthesis. This Chloroflexus aurantiacus (strain ATCC 29366 / DSM 635 / J-10-fl) protein is Reaction center protein L chain (pufL).